A 148-amino-acid chain; its full sequence is Short form salivary protein D7S1 (148 aa).

The first 21 residues, 1 to 21 (MKQNVFFLIAYFSLVFCMCNA), serve as a signal peptide directing secretion. 3 disulfide bridges follow: C28–C61, C41–C147, and C103–C119.

Belongs to the PBP/GOBP family. In terms of tissue distribution, female salivary gland.

It localises to the secreted. Its function is as follows. In contrast to the related D7 salivary proteins that can bind biogenic amines, does not bind serotonin. This Aedes aegypti (Yellowfever mosquito) protein is Short form salivary protein D7S1.